Consider the following 217-residue polypeptide: Deoxyribose-phosphate aldolase (217 aa).

The Proton donor/acceptor role is filled by Asp89. Lys151 (schiff-base intermediate with acetaldehyde) is an active-site residue. Catalysis depends on Lys180, which acts as the Proton donor/acceptor.

Belongs to the DeoC/FbaB aldolase family. DeoC type 1 subfamily.

The protein localises to the cytoplasm. It carries out the reaction 2-deoxy-D-ribose 5-phosphate = D-glyceraldehyde 3-phosphate + acetaldehyde. It functions in the pathway carbohydrate degradation; 2-deoxy-D-ribose 1-phosphate degradation; D-glyceraldehyde 3-phosphate and acetaldehyde from 2-deoxy-alpha-D-ribose 1-phosphate: step 2/2. Functionally, catalyzes a reversible aldol reaction between acetaldehyde and D-glyceraldehyde 3-phosphate to generate 2-deoxy-D-ribose 5-phosphate. This is Deoxyribose-phosphate aldolase from Mycoplasma mobile (strain ATCC 43663 / 163K / NCTC 11711) (Mesomycoplasma mobile).